Here is a 386-residue protein sequence, read N- to C-terminus: Tubulin beta-1 chain (386 aa).

Residues glutamate 7, serine 76, glycine 80, threonine 81, glycine 82, asparagine 142, and asparagine 164 each contribute to the GTP site. Glutamate 7 is a Mg(2+) binding site. The tract at residues 363–386 (YQDATADEEGEYEDEEEDLQAEDM) is disordered. Acidic residues predominate over residues 367-386 (TADEEGEYEDEEEDLQAEDM).

The protein belongs to the tubulin family. Dimer of alpha and beta chains. A typical microtubule is a hollow water-filled tube with an outer diameter of 25 nm and an inner diameter of 15 nM. Alpha-beta heterodimers associate head-to-tail to form protofilaments running lengthwise along the microtubule wall with the beta-tubulin subunit facing the microtubule plus end conferring a structural polarity. Microtubules usually have 13 protofilaments but different protofilament numbers can be found in some organisms and specialized cells. It depends on Mg(2+) as a cofactor.

It localises to the cytoplasm. The protein resides in the cytoskeleton. Tubulin is the major constituent of microtubules, a cylinder consisting of laterally associated linear protofilaments composed of alpha- and beta-tubulin heterodimers. Microtubules grow by the addition of GTP-tubulin dimers to the microtubule end, where a stabilizing cap forms. Below the cap, tubulin dimers are in GDP-bound state, owing to GTPase activity of alpha-tubulin. In Avena sativa (Oat), this protein is Tubulin beta-1 chain (TUBB1).